Reading from the N-terminus, the 200-residue chain is WUSCHEL-related homeobox 9 (200 aa).

The segment at residues 10–74 (VKCGRWNPTA…NHKARERHHH (65 aa)) is a DNA-binding region (homeobox; WUS-type). The segment covering 70–80 (ERHHHKKRRRG) has biased composition (basic residues). The segment at 70 to 118 (ERHHHKKRRRGASSPDSGSNDDDGRAAAHEGDADLVLQPPESKREARSY) is disordered. Basic and acidic residues predominate over residues 91–101 (DDGRAAAHEGD).

Belongs to the WUS homeobox family. As to expression, specifically expressed in the central cells of the quiescent center (QC) of the root.

It localises to the nucleus. In terms of biological role, transcription factor which may be involved in the specification and maintenance of the stem cells (QC cells) in the root apical meristem (RAM). In Oryza sativa subsp. japonica (Rice), this protein is WUSCHEL-related homeobox 9 (WOX9).